Here is a 240-residue protein sequence, read N- to C-terminus: Allene oxide cyclase, chloroplastic (240 aa).

A chloroplast-targeting transit peptide spans 1–49; that stretch reads MAAAAPSRVSVRAAAPGQTGGFAKIRPQVVVAAAARSAGVSGRRARSVR.

This sequence belongs to the allene oxide cyclase family.

The protein localises to the plastid. Its subcellular location is the chloroplast. The catalysed reaction is (9Z,13S,15Z)-12,13-epoxyoctadeca-9,11,15-trienoate = (9S,13S,15Z)-12-oxophyto-10,15-dienoate. It participates in lipid metabolism; polyunsaturated fatty acid biosynthesis. Functionally, involved in the production of 12-oxo-phytodienoic acid (OPDA), a precursor of jasmonic acid (JA). Required for the production of JA in response to wounding. Necessary for flower and coleoptile development regulation by light, including blue (BL), red (RL) and far red (FR) lights. Involved in the auxin-mediated signaling pathway leading to growth stimulation. Essential for photodestruction of phyA upon activation by RL and FR. Implicated in responses to salt stress (NaCl). Confers resistance to incompatible strains of the blast fungus Magnaporthe grisea, jasmonic acid (JA) thus playing a significant role in the resistance to fungal infection. Implicated in riboflavin-induced resistance to the sheath blight Rhizoctonia solani. Required for Pseudomonas fluorescens-mediated JA-dependent induced systemic resistance (ISR). Confers some resistance, independently of the JA pathway but probably via OPDA accumulation, to brown planthopper (BPH, Nilaparvata lugens), a destructive, monophagous, piercing-sucking insect, mainly by reducing its feeding activity and survival rate. Triggers resistance to the chewing insect striped stem borer (SSB) Chilo suppressalis, to the root hemiparasite witchweed Striga hermonthica, and to the root feeder insect rice water weevil Lissorhoptrus oryzophilus, in a JA-dependent manner, by attenuating both the growth mass and growth rate of caterpillars. The polypeptide is Allene oxide cyclase, chloroplastic (Oryza sativa subsp. indica (Rice)).